The following is a 507-amino-acid chain: Maturase K (507 aa).

Belongs to the intron maturase 2 family. MatK subfamily.

The protein resides in the plastid. It is found in the chloroplast. In terms of biological role, usually encoded in the trnK tRNA gene intron. Probably assists in splicing its own and other chloroplast group II introns. The protein is Maturase K of Cupaniopsis anacardioides (Carrotwood).